A 160-amino-acid chain; its full sequence is SsrA-binding protein (160 aa).

The interval 136–160 (KRDTVRERDSNRELQRAVRNKGKED) is disordered.

The protein belongs to the SmpB family.

It localises to the cytoplasm. In terms of biological role, required for rescue of stalled ribosomes mediated by trans-translation. Binds to transfer-messenger RNA (tmRNA), required for stable association of tmRNA with ribosomes. tmRNA and SmpB together mimic tRNA shape, replacing the anticodon stem-loop with SmpB. tmRNA is encoded by the ssrA gene; the 2 termini fold to resemble tRNA(Ala) and it encodes a 'tag peptide', a short internal open reading frame. During trans-translation Ala-aminoacylated tmRNA acts like a tRNA, entering the A-site of stalled ribosomes, displacing the stalled mRNA. The ribosome then switches to translate the ORF on the tmRNA; the nascent peptide is terminated with the 'tag peptide' encoded by the tmRNA and targeted for degradation. The ribosome is freed to recommence translation, which seems to be the essential function of trans-translation. The protein is SsrA-binding protein of Pseudomonas putida (strain W619).